A 364-amino-acid chain; its full sequence is Dihydroorotate dehydrogenase (quinone) (364 aa).

FMN contacts are provided by residues 61-65 (AGFDK) and Ser85. Lys65 is a substrate binding site. A substrate-binding site is contributed by 110 to 114 (NRMGF). FMN contacts are provided by Asn139 and Asn170. A substrate-binding site is contributed by Asn170. The active-site Nucleophile is the Ser173. Residue Asn175 participates in substrate binding. FMN is bound by residues Lys214 and Ser242. 243–244 (NT) contributes to the substrate binding site. Residues Gly266, Gly295, and 316–317 (YS) each bind FMN.

Belongs to the dihydroorotate dehydrogenase family. Type 2 subfamily. As to quaternary structure, monomer. The cofactor is FMN.

Its subcellular location is the cell membrane. The catalysed reaction is (S)-dihydroorotate + a quinone = orotate + a quinol. It functions in the pathway pyrimidine metabolism; UMP biosynthesis via de novo pathway; orotate from (S)-dihydroorotate (quinone route): step 1/1. Catalyzes the conversion of dihydroorotate to orotate with quinone as electron acceptor. This chain is Dihydroorotate dehydrogenase (quinone), found in Bradyrhizobium sp. (strain ORS 278).